The chain runs to 120 residues: Immunoglobulin kappa variable 2D-26 (120 aa).

A signal peptide spans methionine 1–alanine 20. Positions glutamate 21–cysteine 43 are framework-1. Residues glutamate 21–proline 120 form the Ig-like domain. A disulfide bond links cysteine 43 and cysteine 113. Residues arginine 44 to tyrosine 59 form a complementarity-determining-1 region. Residues tryptophan 60 to tyrosine 74 are framework-2. The interval glutamate 75 to serine 81 is complementarity-determining-2. Residues glycine 82–cysteine 113 are framework-3. A complementarity-determining-3 region spans residues methionine 114–proline 120.

In terms of assembly, immunoglobulins are composed of two identical heavy chains and two identical light chains; disulfide-linked.

Its subcellular location is the secreted. The protein resides in the cell membrane. Functionally, v region of the variable domain of immunoglobulin light chains that participates in the antigen recognition. Immunoglobulins, also known as antibodies, are membrane-bound or secreted glycoproteins produced by B lymphocytes. In the recognition phase of humoral immunity, the membrane-bound immunoglobulins serve as receptors which, upon binding of a specific antigen, trigger the clonal expansion and differentiation of B lymphocytes into immunoglobulins-secreting plasma cells. Secreted immunoglobulins mediate the effector phase of humoral immunity, which results in the elimination of bound antigens. The antigen binding site is formed by the variable domain of one heavy chain, together with that of its associated light chain. Thus, each immunoglobulin has two antigen binding sites with remarkable affinity for a particular antigen. The variable domains are assembled by a process called V-(D)-J rearrangement and can then be subjected to somatic hypermutations which, after exposure to antigen and selection, allow affinity maturation for a particular antigen. The sequence is that of Immunoglobulin kappa variable 2D-26 from Homo sapiens (Human).